Consider the following 55-residue polypeptide: Neurotoxin BmP08 (55 aa).

Residues 1–23 (MKIFFAVLVILVLFSMLIWTAYG) form the signal peptide. Intrachain disulfides connect Cys30/Cys45, Cys36/Cys50, and Cys39/Cys53.

In terms of tissue distribution, expressed by the venom gland.

Its subcellular location is the secreted. This Olivierus martensii (Manchurian scorpion) protein is Neurotoxin BmP08.